We begin with the raw amino-acid sequence, 457 residues long: Phosphomethylpyrimidine synthase (457 aa).

Substrate is bound by residues N88, M117, Y146, H182, 204 to 206, 245 to 248, and E284; these read SRG and DACR. Residue H288 coordinates Zn(2+). Y311 contacts substrate. H352 provides a ligand contact to Zn(2+). [4Fe-4S] cluster-binding residues include C428, C431, and C435.

It belongs to the ThiC family. It depends on [4Fe-4S] cluster as a cofactor.

It catalyses the reaction 5-amino-1-(5-phospho-beta-D-ribosyl)imidazole + S-adenosyl-L-methionine = 4-amino-2-methyl-5-(phosphooxymethyl)pyrimidine + CO + 5'-deoxyadenosine + formate + L-methionine + 3 H(+). It participates in cofactor biosynthesis; thiamine diphosphate biosynthesis. Functionally, catalyzes the synthesis of the hydroxymethylpyrimidine phosphate (HMP-P) moiety of thiamine from aminoimidazole ribotide (AIR) in a radical S-adenosyl-L-methionine (SAM)-dependent reaction. This Clostridium tetani (strain Massachusetts / E88) protein is Phosphomethylpyrimidine synthase.